Reading from the N-terminus, the 438-residue chain is Glutamyl-tRNA reductase (438 aa).

Substrate contacts are provided by residues 49–52, S109, 114–116, and Q120; these read TCNR and EGQ. Catalysis depends on C50, which acts as the Nucleophile. 198 to 203 is an NADP(+) binding site; the sequence is GAGRMS.

Belongs to the glutamyl-tRNA reductase family. Homodimer.

It catalyses the reaction (S)-4-amino-5-oxopentanoate + tRNA(Glu) + NADP(+) = L-glutamyl-tRNA(Glu) + NADPH + H(+). It functions in the pathway porphyrin-containing compound metabolism; protoporphyrin-IX biosynthesis; 5-aminolevulinate from L-glutamyl-tRNA(Glu): step 1/2. Its pathway is porphyrin-containing compound metabolism; chlorophyll biosynthesis. In terms of biological role, catalyzes the NADPH-dependent reduction of glutamyl-tRNA(Glu) to glutamate 1-semialdehyde (GSA). The sequence is that of Glutamyl-tRNA reductase from Synechococcus sp. (strain WH7803).